The primary structure comprises 810 residues: Oligoxyloglucan-reducing end-specific xyloglucanase (810 aa).

The first 28 residues, M1–A28, serve as a signal peptide directing secretion. N-linked (GlcNAc...) asparagine glycosylation occurs at N32. The active-site Nucleophile is D66. The stretch at F126–F135 is one BNR 1 repeat. N188 is a glycosylation site (N-linked (GlcNAc...) asparagine). The BNR 2 repeat unit spans residues Y226–E236. N-linked (GlcNAc...) asparagine glycosylation is found at N298, N312, and N321. The stretch at Y359–K369 is one BNR 3 repeat. N-linked (GlcNAc...) asparagine glycosylation occurs at N455. D498 (proton donor) is an active-site residue. N544 carries an N-linked (GlcNAc...) asparagine glycan. One copy of the BNR 4 repeat lies at Y554–K564. Residues N573 and N612 are each glycosylated (N-linked (GlcNAc...) asparagine). The BNR 5 repeat unit spans residues Y617–W626. N638 carries N-linked (GlcNAc...) asparagine glycosylation. BNR repeat units lie at residues Y658–Y667, Y705–K716, and Y759–V769.

Belongs to the glycosyl hydrolase 74 family.

The protein resides in the secreted. The enzyme catalyses Hydrolysis of cellobiose from the reducing end of xyloglucans consisting of a beta-(1-&gt;4)-linked glucan carrying alpha-D-xylosyl groups on O-6 of the glucose residues. To be a substrate, the first residue must be unsubstituted, the second residue may bear a xylosyl group, whether further glycosylated or not, and the third residue, which becomes the new terminus by the action of the enzyme, is preferably xylosylated, but this xylose residue must not be further substituted.. Oligoxyloglucan-reducing end-specific xyloglucanase involved in degradation of xyloglucans. Releases the first two glycosyl segments from oligoxyloglucans. Active against cotton xyloglucan, tamarind xyloglucan and tamarind xyloglucan oligomers. This is Oligoxyloglucan-reducing end-specific xyloglucanase (xgcA) from Emericella nidulans (strain FGSC A4 / ATCC 38163 / CBS 112.46 / NRRL 194 / M139) (Aspergillus nidulans).